A 508-amino-acid polypeptide reads, in one-letter code: Zinc finger CCCH-type with G patch domain-containing protein (508 aa).

The disordered stretch occupies residues 67-86 (QQESSHHDSGTPETDTKTSV). A compositionally biased stretch (basic and acidic residues) spans 69–86 (ESSHHDSGTPETDTKTSV). The segment at 161 to 188 (RSMVPCPYFLEGKCKFAGAECRFSHGYL) adopts a C3H1-type zinc-finger fold. The disordered stretch occupies residues 253 to 282 (IYPLGPEEVESDSESDSQSDTGDSSSSKAA). Over residues 259-269 (EEVESDSESDS) the composition is skewed to acidic residues. Residues 270–279 (QSDTGDSSSS) show a composition bias toward low complexity. A G-patch domain is found at 310–356 (TKGIGSKLMAKMGYIFGKGLGKDGEGRVEPIEVVVLPQGKSLDKCAE). Residues 404–426 (SLHDLRVSHPGAKPDIRKTRKSA) form a disordered region.

It is found in the nucleus. Functionally, transcription repressor. The chain is Zinc finger CCCH-type with G patch domain-containing protein from Nematostella vectensis (Starlet sea anemone).